We begin with the raw amino-acid sequence, 576 residues long: Non-neuronal cytoplasmic intermediate filament protein (576 aa).

Residues 1–51 are disordered; it reads MTSKISTTYEEEGRQSKIQPRAFVITRSGPSSKSSSFSARQSYASSRQSIT. Positions 2–75 are head; that stretch reads TSKISTTYEE…FRGTREKEKR (74 aa). A compositionally biased stretch (low complexity) spans 28–49; the sequence is SGPSSKSSSFSARQSYASSRQS. Residues 73–425 form the IF rod domain; the sequence is EKREMQNLNE…KLLEGEESRV (353 aa). A coil 1A region spans residues 76 to 108; sequence EMQNLNERLASYIEKVHFLDAQVKKLEAENEAL. The tract at residues 109-122 is linker 1; sequence RNRKSESLQPIRDA. The interval 123 to 260 is coil 1B; it reads YENELAQARK…DLLDQLELLK (138 aa). A linker 2 region spans residues 261 to 278; that stretch reads PEPIQIKGMDYAEFWKSE. Positions 279–425 are coil 2; sequence LSKCVREIQS…KLLEGEESRV (147 aa). The tract at residues 426–576 is tail; the sequence is GLRSLVEQAI…KATLIAKFSG (151 aa). In terms of domain architecture, LTD spans 456–574; it reads GSMTIQRSSK…NEKATLIAKF (119 aa).

This sequence belongs to the intermediate filament family. Can form homopolymers.

The protein localises to the cytoplasm. This Cornu aspersum (Brown garden snail) protein is Non-neuronal cytoplasmic intermediate filament protein.